Reading from the N-terminus, the 397-residue chain is Acetate kinase (397 aa).

Asn7 lines the Mg(2+) pocket. ATP is bound at residue Lys14. Position 90 (Arg90) interacts with substrate. Asp147 functions as the Proton donor/acceptor in the catalytic mechanism. ATP is bound by residues 207 to 211 (HLGNG), 282 to 284 (DFR), and 330 to 334 (GLGEN). Mg(2+) is bound at residue Glu383.

This sequence belongs to the acetokinase family. Homodimer. Mg(2+) serves as cofactor. The cofactor is Mn(2+).

The protein localises to the cytoplasm. It carries out the reaction acetate + ATP = acetyl phosphate + ADP. It participates in metabolic intermediate biosynthesis; acetyl-CoA biosynthesis; acetyl-CoA from acetate: step 1/2. In terms of biological role, catalyzes the formation of acetyl phosphate from acetate and ATP. Can also catalyze the reverse reaction. This chain is Acetate kinase, found in Clostridium botulinum (strain Kyoto / Type A2).